The chain runs to 143 residues: Large ribosomal subunit protein uL11 (143 aa).

It belongs to the universal ribosomal protein uL11 family. Part of the ribosomal stalk of the 50S ribosomal subunit. Interacts with L10 and the large rRNA to form the base of the stalk. L10 forms an elongated spine to which L12 dimers bind in a sequential fashion forming a multimeric L10(L12)X complex. Post-translationally, one or more lysine residues are methylated.

Forms part of the ribosomal stalk which helps the ribosome interact with GTP-bound translation factors. In Treponema denticola (strain ATCC 35405 / DSM 14222 / CIP 103919 / JCM 8153 / KCTC 15104), this protein is Large ribosomal subunit protein uL11.